Here is a 308-residue protein sequence, read N- to C-terminus: Protoheme IX farnesyltransferase (308 aa).

The next 9 helical transmembrane spans lie at 31-51 (VGIV…AFYF), 60-80 (LDIV…SCVI), 110-130 (ALWF…MTNL), 131-151 (TAAG…TMWS), 157-177 (VNTI…WTAV), 185-205 (AWVL…ALAI), 232-252 (IIIW…LGLP), 253-273 (IVIL…VGYR), and 285-305 (FVYS…FTLF).

This sequence belongs to the UbiA prenyltransferase family. Protoheme IX farnesyltransferase subfamily. As to quaternary structure, interacts with CtaA.

It is found in the cell membrane. It carries out the reaction heme b + (2E,6E)-farnesyl diphosphate + H2O = Fe(II)-heme o + diphosphate. Its pathway is porphyrin-containing compound metabolism; heme O biosynthesis; heme O from protoheme: step 1/1. Converts heme B (protoheme IX) to heme O by substitution of the vinyl group on carbon 2 of heme B porphyrin ring with a hydroxyethyl farnesyl side group. The protein is Protoheme IX farnesyltransferase of Bacillus licheniformis (strain ATCC 14580 / DSM 13 / JCM 2505 / CCUG 7422 / NBRC 12200 / NCIMB 9375 / NCTC 10341 / NRRL NRS-1264 / Gibson 46).